We begin with the raw amino-acid sequence, 509 residues long: BPI fold-containing family C protein (509 aa).

Positions 1–23 (MRTKQVPVLWACFLLWSLYIASS) are cleaved as a signal peptide. Residues asparagine 63, asparagine 79, asparagine 92, asparagine 113, and asparagine 117 are each glycosylated (N-linked (GlcNAc...) asparagine). A disulfide bridge connects residues cysteine 161 and cysteine 202. Asparagine 215, asparagine 227, asparagine 357, asparagine 374, and asparagine 457 each carry an N-linked (GlcNAc...) asparagine glycan.

This sequence belongs to the BPI/LBP/Plunc superfamily. BPI/LBP family.

It is found in the secreted. This Mus musculus (Mouse) protein is BPI fold-containing family C protein (Bpifc).